Consider the following 190-residue polypeptide: Xanthine phosphoribosyltransferase 1 (190 aa).

Xanthine is bound by residues Leu-20 and Asn-27. 128–132 (ANGEA) serves as a coordination point for 5-phospho-alpha-D-ribose 1-diphosphate. Lys-156 is a xanthine binding site.

The protein belongs to the purine/pyrimidine phosphoribosyltransferase family. Xpt subfamily. Homodimer.

Its subcellular location is the cytoplasm. The enzyme catalyses XMP + diphosphate = xanthine + 5-phospho-alpha-D-ribose 1-diphosphate. It participates in purine metabolism; XMP biosynthesis via salvage pathway; XMP from xanthine: step 1/1. Its function is as follows. Converts the preformed base xanthine, a product of nucleic acid breakdown, to xanthosine 5'-monophosphate (XMP), so it can be reused for RNA or DNA synthesis. This Clostridium botulinum (strain ATCC 19397 / Type A) protein is Xanthine phosphoribosyltransferase 1.